An 822-amino-acid polypeptide reads, in one-letter code: Dimethyl sulfoxide/trimethylamine N-oxide reductase (822 aa).

The segment at residues 1–42 is a signal peptide (tat-type signal); sequence MTKLSGQELHAELSRRAFLSYTAAVGALGLCGTSLLAQGARA. Residues tryptophan 158, 158-160, serine 189, 232-233, 262-263, 283-285, 364-365, arginine 368, asparagine 476, histidine 480, 500-501, arginine 523, aspartate 553, 683-686, arginine 689, 691-693, asparagine 779, and 796-797 each bind Mo-bis(molybdopterin guanine dinucleotide); these read WKS, KT, IN, QTD, WS, QD, ASHP, HSQ, and GQ.

It belongs to the prokaryotic molybdopterin-containing oxidoreductase family. As to quaternary structure, homodimer. It depends on Mo-bis(molybdopterin guanine dinucleotide) as a cofactor. Predicted to be exported by the Tat system. The position of the signal peptide cleavage has been experimentally proven.

The protein localises to the periplasm. It carries out the reaction dimethyl sulfide + a menaquinone + H2O = dimethyl sulfoxide + a menaquinol. The catalysed reaction is trimethylamine + 2 Fe(III)-[cytochrome c] + H2O = trimethylamine N-oxide + 2 Fe(II)-[cytochrome c] + 3 H(+). Catalyzes the reduction of dimethyl sulfoxide (DMSO) and trimethylamine N-oxide (TMAO) to dimethyl sulfide (DMS) and trimethylamine, respectively. The terminal DMSO reductase can also use various sulfoxides and N-oxide compounds as terminal electron acceptor in addition to DMSO and TMAO. This chain is Dimethyl sulfoxide/trimethylamine N-oxide reductase (dmsA), found in Cereibacter sphaeroides (Rhodobacter sphaeroides).